Reading from the N-terminus, the 839-residue chain is Oligopeptide transporter phomP2 (839 aa).

Positions 1–58 are disordered; sequence MEADPKVPFTDEMNIQDEHNWESGSWSSSRRSNDSNVTLLSRRSSVEQHEDERQKDSD. Over residues 23–36 the composition is skewed to low complexity; the sequence is SGSWSSSRRSNDSN. N-linked (GlcNAc...) asparagine glycans are attached at residues Asn-33 and Asn-36. Over residues 44–58 the composition is skewed to basic and acidic residues; it reads SSVEQHEDERQKDSD. A run of 6 helical transmembrane segments spans residues 105–125, 177–197, 210–230, 268–288, 315–335, and 345–365; these read VWLL…VYYF, ALVV…GPLS, PWAI…VGLY, VFMA…FVFP, GFGL…SPLF, and FVGA…SDAL. Asn-386 and Asn-398 each carry an N-linked (GlcNAc...) asparagine glycan. 4 consecutive transmembrane segments (helical) span residues 415-435, 478-498, 505-525, and 585-605; these read AMHF…AVLF, AWYA…LYAG, WGLQ…GMLF, and WELL…NWAV. Gly residues predominate over residues 629 to 646; the sequence is QGLGLGQGGGGGGGGGGQ. The disordered stretch occupies residues 629 to 654; the sequence is QGLGLGQGGGGGGGGGGQQQRAAGAH. Helical transmembrane passes span 665-685, 697-717, and 728-748; these read NFFS…FGGG, WLLP…WLIH, and WPLH…FPTT. Asn-749 is a glycosylation site (N-linked (GlcNAc...) asparagine). Residues 781–801 form a helical membrane-spanning segment; sequence AGLDCGAQLVQMVLGVAFLVF.

Belongs to the oligopeptide OPT transporter family.

Its subcellular location is the membrane. Functionally, oligopeptide transporter; part of the gene cluster that mediates the biosynthesis of the phomopsins, a group of hexapeptide mycotoxins which infects lupins and causes lupinosis disease in livestock. This chain is Oligopeptide transporter phomP2, found in Diaporthe leptostromiformis (Lupinosis disease fungus).